An 865-amino-acid polypeptide reads, in one-letter code: MLSTALSPSSPHADYNSYSSSLSPTSPRFHASSAPHGRRSPSPSRLESLLDAPLPSCRPSRSPRSRKIRDALARHIRPHLTPRTLTMLFLWMLSVWSIHHFFLPISSLSRLSNPRAEEHFLSTAFPPPPQRIGDDHLDSVDPRWRAYHPLPAPDPPFPRLRPTRFLPPQCLEQWFAEGETLCGAKELGEEEKLDATWLWVNGSDHRWRDSMIEWREKENVNSPERHFREQNELVHSMRSVLDALPGHLRTFHLILADYTFNYPEDLELVPFSIIPDLEKVASKSKGRRHPRDLPGTPPSFSNLTERVTPESISASLASHLQSEWRIVQTPTWLDFSRRDPSDPSHPFHPYSVSKAGERGQHYAEASYPTLRYASHWEVFHTPSVDRDGRQELMGEREWRENEWKKKALPTFNSMAIESRIGWLPGLADAIIALNDDFFLLRPHAVSDFHSPLYGSVIRFDHGYNQQVRPEVVKSHINDPGEIGGLYHANAILSQRFPHRLRPYFAHVPKVITRGLHHEASLMFKEALTESSTRRFREMKIGEGDVQMQWLLTSLRVERWREALLWTWVVANMGTISGSQDRWDDATRTAIKDMFGFTENDNDVVKIEVHRGERWTLEPGRMQKAFEQAGWEAPKATEFLFSSMDGTMPPLLKHGEDPAQNDRCMIDLNRCFGVFWTREEDILSTDMMKRLTFQYPECGDCMIMALVTASGTLGLNAFFPPKETTVTAPELAPGDGYPKFLPPPHLPLTPTWHEADFSLANILSTTALPGEQVDIRQYCMRLLSRYLYLDARSVSHFHMLKSAEHAQRVFKMIQDNPRVSILGMNDDIESDYDEVKRLMNEWFEMRWPRKAVWEREWDPVKDRYID.

Residues 1-10 show a composition bias toward polar residues; that stretch reads MLSTALSPSS. The segment at 1–66 is disordered; the sequence is MLSTALSPSS…CRPSRSPRSR (66 aa). The Cytoplasmic segment spans residues 1-84; it reads MLSTALSPSS…HIRPHLTPRT (84 aa). Composition is skewed to low complexity over residues 17 to 26 and 40 to 60; these read SYSSSLSPTS and SPSP…CRPS. A helical transmembrane segment spans residues 85–105; it reads LTMLFLWMLSVWSIHHFFLPI. Over 106-865 the chain is Lumenal; the sequence is SSLSRLSNPR…WDPVKDRYID (760 aa). N-linked (GlcNAc...) asparagine glycans are attached at residues Asn201 and Asn302. Positions 283–304 are disordered; that stretch reads KSKGRRHPRDLPGTPPSFSNLT.

It belongs to the XPT1 family. The cofactor is Mn(2+).

The protein resides in the golgi apparatus membrane. The catalysed reaction is 3-alpha-D-mannopyranosyl-alpha-D-mannopyranose + UDP-alpha-D-xylose = 3-O-(6-O-alpha-D-xylosylphospho-alpha-D-mannopyranosyl)-alpha-D-mannopyranose + UMP + H(+). In terms of biological role, xylosylphosphotransferase that is specific for UDP-xylose as a donor and mannose as an acceptor to form a xylose-alpha-1-phosphate-6-mannose linkage. Functions in the O-glycosylation of proteins en route through the secretory pathway. This Cryptococcus gattii serotype B (strain WM276 / ATCC MYA-4071) (Filobasidiella gattii) protein is 3-O-alpha-D-mannopyranosyl-alpha-D-mannopyranose xylosylphosphotransferase (XPT1).